The following is a 907-amino-acid chain: Interference hedgehog (907 aa).

An N-terminal signal peptide occupies residues M1–A23. Residues A24–P709 are Extracellular-facing. 4 consecutive Ig-like C2-type domains span residues P42 to S149, G152 to A233, P252 to L340, and P346 to N433. 3 cysteine pairs are disulfide-bonded: C65–C127, C173–C221, and C276–C324. N-linked (GlcNAc...) asparagine glycosylation is found at N101, N203, N300, and N355. The cysteines at positions 367 and 415 are disulfide-linked. The disordered stretch occupies residues G427–V474. Over residues Q462–V474 the composition is skewed to polar residues. Fibronectin type-III domains lie at P468 to G578 and V586 to P681. N473 carries N-linked (GlcNAc...) asparagine glycosylation. Heparin-binding residues include R504, K511, and K513. N-linked (GlcNAc...) asparagine glycans are attached at residues N537 and N548. R552 contributes to the heparin binding site. N-linked (GlcNAc...) asparagine glycosylation is present at N568. Polar residues predominate over residues G676–Q688. A disordered region spans residues G676–H701. N702 carries an N-linked (GlcNAc...) asparagine glycan. The helical transmembrane segment at M710–L730 threads the bilayer. Topologically, residues C731–V907 are cytoplasmic. 2 disordered regions span residues A780–D805 and M829–G881. Composition is skewed to low complexity over residues Q781 to Q794 and N853 to G863. A compositionally biased stretch (polar residues) spans L865–N878.

The protein belongs to the immunoglobulin superfamily. IHOG family. As to quaternary structure, homodimer. Heterotetramer; 2 iHog chains bind 2 hh chains when facilitated by heparin, heparin is required to promote high-affinity interactions between hh and iHog.

It is found in the membrane. In terms of biological role, mediates response to the active Hedgehog (Hh) protein signal in embryos, functioning upstream or at the level of patched (ptc). The protein is Interference hedgehog of Drosophila virilis (Fruit fly).